The chain runs to 557 residues: MKRGYEVLRDPHLNKGMAFTLEERQQLNIHGLLPPCFLGQDVQVFSILKNFERLTSDLDRYILLMSLQDRNEKLFYKVLTSDIERFMPIVYTPTVGLACQQYGLAFRRPRGLFITIHDRGHIATMLKSWPESVIKAIVVTDGERILGLGDLGCYGMGIPVGKLALYTACGGVKPHECLPVMLDVGTDNEALLKDPLYIGLRHKRIRGQAYDDLLDEFMEAVTSRYGMNCLIQFEDFANANAFRLLHKYRNKYCTFNDDIQGTASVAVAGLLAALRITKNRLSDHTVLFQGAGEAALGIANLIVMAMEKEGVSKEAAVKRIWMVDSKGLIVKGRASLTAEKTRFAHEHAEMKNLEDIVKDIKPSVLIGVAAIGGAFTKEILQDMAAFNKRPIIFALSNPTSKAECTAEQCYKYTEGRGIFASGSPFDPVTLPNGKTLYPGQGNNSYVFPGVALGVIACGLKHIGEDVFLTTAEVIAEQVSEENLQEGRLYPPLVTIQHVSLKIAVRIAEEAYRNNTASTYPQPKDLEAFIQSQIYSTDYNSFVADSYTWPEEAMKVKL.

The active-site Proton donor is the tyrosine 91. Arginine 144 is a binding site for NADP(+). The Proton acceptor role is filled by lysine 162. A divalent metal cation contacts are provided by glutamate 234, aspartate 235, and aspartate 258. NADP(+) contacts are provided by residues aspartate 258, 290-307 (GAGE…MAME), and asparagine 397.

This sequence belongs to the malic enzymes family. In terms of assembly, homotetramer. The cofactor is Mg(2+). It depends on Mn(2+) as a cofactor.

Its subcellular location is the cytoplasm. The catalysed reaction is (S)-malate + NADP(+) = pyruvate + CO2 + NADPH. The enzyme catalyses oxaloacetate + H(+) = pyruvate + CO2. The protein is NADP-dependent malic enzyme (ME1) of Anas platyrhynchos (Mallard).